Reading from the N-terminus, the 438-residue chain is MSNSTQHWIAQRGTALQGSLTIPGDKSVSHRAVMFAALADGISKIDGFLEGEDTRSTAAIFAQLGVRIETPSASQRIVHGVGVDGLQPPQGPLDCGNAGTGMRLLAGVLAAQRFDSVLVGDASLSKRPMRRVTGPLAQMGARIETESDGTPPLRVHGGQALQGITFASPVASAQVKSAVLLAGLYATGETSVSEPHPTRDYTERMLSAFGVEIAFSPGQARLRGGQRLRATDIAVPADFSSAAFFIVAASIIPGSGVTLRAVGLNPRRTGLLAALRLMGADIVEDNHAEHGGEPVADLRVRYAPLRGAQIPEALVPDMIDEFPALFVAAAAARGDTVVSGAAELRVKESDRLAAMATGLRALGIVVDETPDGATIHGGTLGSGVIESHGDHRIAMAFAIAGQLSTGTVQVNDVANVATSFPGFDSLAQGAGFGLSARP.

Residues Lys-26, Ser-27, and Arg-31 each contribute to the 3-phosphoshikimate site. Position 26 (Lys-26) interacts with phosphoenolpyruvate. The phosphoenolpyruvate site is built by Gly-99 and Arg-127. The 3-phosphoshikimate site is built by Ser-172, Gln-174, Asp-320, and Lys-347. Gln-174 provides a ligand contact to phosphoenolpyruvate. Residue Asp-320 is the Proton acceptor of the active site. The phosphoenolpyruvate site is built by Arg-351 and Arg-392.

This sequence belongs to the EPSP synthase family. In terms of assembly, monomer.

Its subcellular location is the cytoplasm. It catalyses the reaction 3-phosphoshikimate + phosphoenolpyruvate = 5-O-(1-carboxyvinyl)-3-phosphoshikimate + phosphate. It functions in the pathway metabolic intermediate biosynthesis; chorismate biosynthesis; chorismate from D-erythrose 4-phosphate and phosphoenolpyruvate: step 6/7. In terms of biological role, catalyzes the transfer of the enolpyruvyl moiety of phosphoenolpyruvate (PEP) to the 5-hydroxyl of shikimate-3-phosphate (S3P) to produce enolpyruvyl shikimate-3-phosphate and inorganic phosphate. In Xanthomonas campestris pv. campestris (strain 8004), this protein is 3-phosphoshikimate 1-carboxyvinyltransferase.